Reading from the N-terminus, the 517-residue chain is GMP synthase [glutamine-hydrolyzing] (517 aa).

The 192-residue stretch at K11 to N202 folds into the Glutamine amidotransferase type-1 domain. The Nucleophile role is filled by C88. Active-site residues include H176 and E178. The region spanning W203–R392 is the GMPS ATP-PPase domain. S230–S236 is a binding site for ATP.

In terms of assembly, homodimer.

It carries out the reaction XMP + L-glutamine + ATP + H2O = GMP + L-glutamate + AMP + diphosphate + 2 H(+). It functions in the pathway purine metabolism; GMP biosynthesis; GMP from XMP (L-Gln route): step 1/1. Functionally, catalyzes the synthesis of GMP from XMP. The chain is GMP synthase [glutamine-hydrolyzing] (guaA) from Lacticaseibacillus rhamnosus (Lactobacillus rhamnosus).